Reading from the N-terminus, the 200-residue chain is ATP-dependent Clp protease proteolytic subunit 2 (200 aa).

S96 functions as the Nucleophile in the catalytic mechanism. The active site involves H121.

This sequence belongs to the peptidase S14 family. Fourteen ClpP subunits assemble into 2 heptameric rings which stack back to back to give a disk-like structure with a central cavity, resembling the structure of eukaryotic proteasomes.

Its subcellular location is the cytoplasm. It carries out the reaction Hydrolysis of proteins to small peptides in the presence of ATP and magnesium. alpha-casein is the usual test substrate. In the absence of ATP, only oligopeptides shorter than five residues are hydrolyzed (such as succinyl-Leu-Tyr-|-NHMec, and Leu-Tyr-Leu-|-Tyr-Trp, in which cleavage of the -Tyr-|-Leu- and -Tyr-|-Trp bonds also occurs).. In terms of biological role, cleaves peptides in various proteins in a process that requires ATP hydrolysis. Has a chymotrypsin-like activity. Plays a major role in the degradation of misfolded proteins. The protein is ATP-dependent Clp protease proteolytic subunit 2 of Synechococcus sp. (strain JA-2-3B'a(2-13)) (Cyanobacteria bacterium Yellowstone B-Prime).